Here is a 273-residue protein sequence, read N- to C-terminus: Dermonecrotic toxin LruSicTox-alphaIC1a (273 aa).

Histidine 5 is an active-site residue. The Mg(2+) site is built by glutamate 25 and aspartate 27. Catalysis depends on histidine 41, which acts as the Nucleophile. 2 disulfide bridges follow: cysteine 45-cysteine 51 and cysteine 47-cysteine 190. Aspartate 85 provides a ligand contact to Mg(2+).

The protein belongs to the arthropod phospholipase D family. Class II subfamily. Requires Mg(2+) as cofactor. Expressed by the venom gland.

It localises to the secreted. The catalysed reaction is an N-(acyl)-sphingosylphosphocholine = an N-(acyl)-sphingosyl-1,3-cyclic phosphate + choline. It carries out the reaction an N-(acyl)-sphingosylphosphoethanolamine = an N-(acyl)-sphingosyl-1,3-cyclic phosphate + ethanolamine. The enzyme catalyses a 1-acyl-sn-glycero-3-phosphocholine = a 1-acyl-sn-glycero-2,3-cyclic phosphate + choline. It catalyses the reaction a 1-acyl-sn-glycero-3-phosphoethanolamine = a 1-acyl-sn-glycero-2,3-cyclic phosphate + ethanolamine. In terms of biological role, dermonecrotic toxins cleave the phosphodiester linkage between the phosphate and headgroup of certain phospholipids (sphingolipid and lysolipid substrates), forming an alcohol (often choline) and a cyclic phosphate. This toxin acts on sphingomyelin (SM). It may also act on ceramide phosphoethanolamine (CPE), lysophosphatidylcholine (LPC) and lysophosphatidylethanolamine (LPE), but not on lysophosphatidylserine (LPS), and lysophosphatidylglycerol (LPG). It acts by transphosphatidylation, releasing exclusively cyclic phosphate products as second products. Induces dermonecrosis, hemolysis, increased vascular permeability, edema, inflammatory response, and platelet aggregation. The protein is Dermonecrotic toxin LruSicTox-alphaIC1a of Loxosceles rufescens (Mediterranean recluse spider).